The chain runs to 389 residues: Na(+)/H(+) antiporter NhaA (389 aa).

11 consecutive transmembrane segments (helical) span residues 14–34 (AGGI…NSPL), 59–79 (LLLW…GLEV), 95–115 (SLPS…YLLF), 124–144 (AGWA…MALL), 154–174 (VFLL…IALF), 177–197 (SDLS…LVGL), 213–233 (LILW…GVII), 261–281 (FLIL…NMSL), 290–310 (IGIA…FSFI), 328–348 (IAPV…IASL), and 363–383 (LGTL…LSKV).

Belongs to the NhaA Na(+)/H(+) (TC 2.A.33) antiporter family.

The protein resides in the cell inner membrane. The catalysed reaction is Na(+)(in) + 2 H(+)(out) = Na(+)(out) + 2 H(+)(in). Na(+)/H(+) antiporter that extrudes sodium in exchange for external protons. This Shewanella sp. (strain W3-18-1) protein is Na(+)/H(+) antiporter NhaA.